The following is a 124-amino-acid chain: Small ribosomal subunit protein uS13 (124 aa).

The segment at 99 to 124 is disordered; that stretch reads PCRGQKTKTNARTCKGPKKTVANKKK. Basic residues predominate over residues 113–124; it reads KGPKKTVANKKK.

This sequence belongs to the universal ribosomal protein uS13 family. Part of the 30S ribosomal subunit. Forms a loose heterodimer with protein S19. Forms two bridges to the 50S subunit in the 70S ribosome.

Located at the top of the head of the 30S subunit, it contacts several helices of the 16S rRNA. In the 70S ribosome it contacts the 23S rRNA (bridge B1a) and protein L5 of the 50S subunit (bridge B1b), connecting the 2 subunits; these bridges are implicated in subunit movement. Contacts the tRNAs in the A and P-sites. This Lachnospira eligens (strain ATCC 27750 / DSM 3376 / VPI C15-48 / C15-B4) (Eubacterium eligens) protein is Small ribosomal subunit protein uS13.